Reading from the N-terminus, the 51-residue chain is Large ribosomal subunit protein bL33 (51 aa).

The protein belongs to the bacterial ribosomal protein bL33 family.

The chain is Large ribosomal subunit protein bL33 from Nitrosococcus oceani (strain ATCC 19707 / BCRC 17464 / JCM 30415 / NCIMB 11848 / C-107).